We begin with the raw amino-acid sequence, 241 residues long: Small ribosomal subunit protein uS2 (241 aa).

This sequence belongs to the universal ribosomal protein uS2 family.

The chain is Small ribosomal subunit protein uS2 from Klebsiella pneumoniae (strain 342).